The primary structure comprises 145 residues: D-aminoacyl-tRNA deacylase (145 aa).

Residues 137-138 carry the Gly-cisPro motif, important for rejection of L-amino acids motif; that stretch reads GP.

The protein belongs to the DTD family. As to quaternary structure, homodimer.

It localises to the cytoplasm. The catalysed reaction is glycyl-tRNA(Ala) + H2O = tRNA(Ala) + glycine + H(+). It catalyses the reaction a D-aminoacyl-tRNA + H2O = a tRNA + a D-alpha-amino acid + H(+). An aminoacyl-tRNA editing enzyme that deacylates mischarged D-aminoacyl-tRNAs. Also deacylates mischarged glycyl-tRNA(Ala), protecting cells against glycine mischarging by AlaRS. Acts via tRNA-based rather than protein-based catalysis; rejects L-amino acids rather than detecting D-amino acids in the active site. By recycling D-aminoacyl-tRNA to D-amino acids and free tRNA molecules, this enzyme counteracts the toxicity associated with the formation of D-aminoacyl-tRNA entities in vivo and helps enforce protein L-homochirality. The chain is D-aminoacyl-tRNA deacylase from Rhodopirellula baltica (strain DSM 10527 / NCIMB 13988 / SH1).